A 137-amino-acid polypeptide reads, in one-letter code: Small ribosomal subunit protein uS11 (137 aa).

Polar residues predominate over residues 1–11; that stretch reads MPPKSRSTGPK. Disordered stretches follow at residues 1-28 and 117-137; these read MPPK…PHGA and TISD…RRRV. The span at 12 to 21 shows a compositional bias: basic residues; the sequence is KTQKARRRDK.

Belongs to the universal ribosomal protein uS11 family. In terms of assembly, part of the 30S ribosomal subunit. Interacts with proteins S7 and S18. Binds to IF-3.

In terms of biological role, located on the platform of the 30S subunit, it bridges several disparate RNA helices of the 16S rRNA. Forms part of the Shine-Dalgarno cleft in the 70S ribosome. The protein is Small ribosomal subunit protein uS11 of Rhodococcus opacus (strain B4).